We begin with the raw amino-acid sequence, 419 residues long: O-methyltransferase desB (419 aa).

S-adenosyl-L-methionine contacts are provided by residues Gly-255–Gly-256, Asp-280, Asp-306–Phe-307, and Arg-323. The active-site Proton acceptor is the His-326.

It belongs to the class I-like SAM-binding methyltransferase superfamily. Cation-independent O-methyltransferase family. S-adenosyl-L-methionine is required as a cofactor.

Its pathway is secondary metabolite biosynthesis. Non-reducing polyketide synthase; part of the gene cluster that mediates the biosynthesis of the bicoumarin desertorin. The non-reducing polyketide synthase desS first catalyzes the formation of the pentaketidic 4,7-dihydroxy-5-methylcoumarin from acetyl coenzyme A and 4 malonyl coenzyme A molecules. Further O-methylation by desB leads to the formation of 7-demethylsiderin. Then, an oxidative phenol coupling catalyzed by the cytochrome P450 monooxygenase desC forms the 6,8'-dimer M-desertorin A via dimerization the monomeric precursor, 7-demethylsiderin. M-desertorin A is further converted to M-desertorin C. The protein is O-methyltransferase desB of Aspergillus desertorum (Emericella desertorum).